The primary structure comprises 112 residues: Large ribosomal subunit protein uL24 (112 aa).

This sequence belongs to the universal ribosomal protein uL24 family. Part of the 50S ribosomal subunit.

Its function is as follows. One of two assembly initiator proteins, it binds directly to the 5'-end of the 23S rRNA, where it nucleates assembly of the 50S subunit. One of the proteins that surrounds the polypeptide exit tunnel on the outside of the subunit. The sequence is that of Large ribosomal subunit protein uL24 from Desulfitobacterium hafniense (strain Y51).